A 182-amino-acid chain; its full sequence is Bifunctional protein PyrR (182 aa).

The short motif at 98-110 (VVLVDDVLFTGRS) is the PRPP-binding element.

The protein belongs to the purine/pyrimidine phosphoribosyltransferase family. PyrR subfamily.

The catalysed reaction is UMP + diphosphate = 5-phospho-alpha-D-ribose 1-diphosphate + uracil. In terms of biological role, regulates the transcription of the pyrimidine nucleotide (pyr) operon in response to exogenous pyrimidines. Also displays a weak uracil phosphoribosyltransferase activity which is not physiologically significant. This chain is Bifunctional protein PyrR, found in Dehalococcoides mccartyi (strain ATCC BAA-2100 / JCM 16839 / KCTC 5957 / BAV1).